A 332-amino-acid polypeptide reads, in one-letter code: MIELKGLTKVFRQNGQEIVALSDVNLHVPRGQIFGILGQSGAGKSTLIRCVNLLERPTAGEVWVDGREITRLSPGELRAARREMGMIFQQFNLFDSRTVFGNVAYPLEVAGWPRARIRERVEELLALVGLADKAGAYPNQLSGGQKQRVGIARALAPGPKLLLSDEATSALDPDTTRSVLALLREINRRLGLTILLITHQMEVVKQVCDSVAILEEGKVVEQGGVLELIGRPGSRLRELFYESTEEAAHRIHPDGVRVLLFFVGASADRPLISETVRRFRVDANILQGAVERIAGATVGRLLVEFTGLPEDIQDALRFLEEQGASPEVIPNG.

The ABC transporter domain occupies I2–Y241. G38–S45 contacts ATP.

It belongs to the ABC transporter superfamily. Methionine importer (TC 3.A.1.24) family. As to quaternary structure, the complex is composed of two ATP-binding proteins (MetN), two transmembrane proteins (MetI) and a solute-binding protein (MetQ).

The protein localises to the cell membrane. It carries out the reaction L-methionine(out) + ATP + H2O = L-methionine(in) + ADP + phosphate + H(+). The catalysed reaction is D-methionine(out) + ATP + H2O = D-methionine(in) + ADP + phosphate + H(+). Functionally, part of the ABC transporter complex MetNIQ involved in methionine import. Responsible for energy coupling to the transport system. This is Methionine import ATP-binding protein MetN from Symbiobacterium thermophilum (strain DSM 24528 / JCM 14929 / IAM 14863 / T).